Consider the following 192-residue polypeptide: Putative manganese efflux pump MntP (192 aa).

The next 6 helical transmembrane spans lie at 3–23 (FSAI…VAAA), 36–56 (VLLV…IGWL), 65–85 (VQAW…GKML), 112–132 (FVLA…LPML), 136–156 (FAIS…AGLF), and 171–191 (LAGG…HLVL).

Belongs to the MntP (TC 9.B.29) family.

The protein localises to the cell inner membrane. Its function is as follows. Probably functions as a manganese efflux pump. The protein is Putative manganese efflux pump MntP of Sorangium cellulosum (strain So ce56) (Polyangium cellulosum (strain So ce56)).